The sequence spans 60 residues: MAVPKQKRSRSRTHHKRAKIYRAFSVPVSVCPNCGAPKLPHRVCLNCGHYGKKQVFEVAE.

Belongs to the bacterial ribosomal protein bL32 family.

This is Large ribosomal subunit protein bL32 from Thermosipho africanus (strain TCF52B).